The following is a 462-amino-acid chain: tRNA modification GTPase MnmE (462 aa).

Residues arginine 27, glutamate 89, and arginine 128 each coordinate (6S)-5-formyl-5,6,7,8-tetrahydrofolate. Residues 223-383 (GLKIAIVGRP…LEAAILAAVG (161 aa)) enclose the TrmE-type G domain. Residues 233 to 238 (NVGKSS), 252 to 258 (TDLPGRT), and 277 to 280 (DTAG) each bind GTP. Mg(2+) contacts are provided by serine 237 and threonine 258. Lysine 462 contacts (6S)-5-formyl-5,6,7,8-tetrahydrofolate.

The protein belongs to the TRAFAC class TrmE-Era-EngA-EngB-Septin-like GTPase superfamily. TrmE GTPase family. In terms of assembly, homodimer. Heterotetramer of two MnmE and two MnmG subunits. K(+) serves as cofactor.

It localises to the cytoplasm. Exhibits a very high intrinsic GTPase hydrolysis rate. Involved in the addition of a carboxymethylaminomethyl (cmnm) group at the wobble position (U34) of certain tRNAs, forming tRNA-cmnm(5)s(2)U34. This Synechococcus sp. (strain ATCC 27144 / PCC 6301 / SAUG 1402/1) (Anacystis nidulans) protein is tRNA modification GTPase MnmE.